Here is a 135-residue protein sequence, read N- to C-terminus: Small ribosomal subunit protein uS12 (135 aa).

D89 carries the 3-methylthioaspartic acid modification. Positions 106-135 (GVKDRKQGRSKYGAKRPKPGQAPAAAGKKK) are disordered. A compositionally biased stretch (basic residues) spans 113 to 123 (GRSKYGAKRPK). Low complexity predominate over residues 124-135 (PGQAPAAAGKKK).

It belongs to the universal ribosomal protein uS12 family. As to quaternary structure, part of the 30S ribosomal subunit. Contacts proteins S8 and S17. May interact with IF1 in the 30S initiation complex.

With S4 and S5 plays an important role in translational accuracy. Its function is as follows. Interacts with and stabilizes bases of the 16S rRNA that are involved in tRNA selection in the A site and with the mRNA backbone. Located at the interface of the 30S and 50S subunits, it traverses the body of the 30S subunit contacting proteins on the other side and probably holding the rRNA structure together. The combined cluster of proteins S8, S12 and S17 appears to hold together the shoulder and platform of the 30S subunit. In Synechococcus sp. (strain JA-3-3Ab) (Cyanobacteria bacterium Yellowstone A-Prime), this protein is Small ribosomal subunit protein uS12.